The primary structure comprises 302 residues: Glutamyl-Q tRNA(Asp) synthetase (302 aa).

Residues 13–17 and Asp49 contribute to the L-glutamate site; that span reads RFAPS. A 'HIGH' region motif is present at residues 16–26; sequence PSPTGPLHLGS. Cys105, Cys107, Tyr119, and Cys123 together coordinate Zn(2+). 2 residues coordinate L-glutamate: Tyr178 and Arg196. Residues 234–238 carry the 'KMSKS' region motif; it reads KLSKQ. Lys237 lines the ATP pocket.

The protein belongs to the class-I aminoacyl-tRNA synthetase family. GluQ subfamily. It depends on Zn(2+) as a cofactor.

Its function is as follows. Catalyzes the tRNA-independent activation of glutamate in presence of ATP and the subsequent transfer of glutamate onto a tRNA(Asp). Glutamate is transferred on the 2-amino-5-(4,5-dihydroxy-2-cyclopenten-1-yl) moiety of the queuosine in the wobble position of the QUC anticodon. The protein is Glutamyl-Q tRNA(Asp) synthetase of Methylococcus capsulatus (strain ATCC 33009 / NCIMB 11132 / Bath).